Here is a 319-residue protein sequence, read N- to C-terminus: Beta-ketoacyl-[acyl-carrier-protein] synthase III (319 aa).

Active-site residues include C114 and H246. Residues 247-251 (QANIR) form an ACP-binding region. N276 is an active-site residue.

The protein belongs to the thiolase-like superfamily. FabH family. In terms of assembly, homodimer.

It is found in the cytoplasm. It carries out the reaction malonyl-[ACP] + acetyl-CoA + H(+) = 3-oxobutanoyl-[ACP] + CO2 + CoA. Its pathway is lipid metabolism; fatty acid biosynthesis. Functionally, catalyzes the condensation reaction of fatty acid synthesis by the addition to an acyl acceptor of two carbons from malonyl-ACP. Catalyzes the first condensation reaction which initiates fatty acid synthesis and may therefore play a role in governing the total rate of fatty acid production. Possesses both acetoacetyl-ACP synthase and acetyl transacylase activities. Its substrate specificity determines the biosynthesis of branched-chain and/or straight-chain of fatty acids. The protein is Beta-ketoacyl-[acyl-carrier-protein] synthase III of Thiobacillus denitrificans (strain ATCC 25259 / T1).